Consider the following 256-residue polypeptide: E3 ubiquitin-protein ligase MIR2 (256 aa).

Over 1 to 83 (MASKDVEEGV…NLWPEMERQE (83 aa)) the chain is Cytoplasmic. The RING-CH-type zinc finger occupies 7–66 (EEGVEGPICWICREEVGNEGIHPCACTGELDVVHPQCLSTWLTVSRNTACQMCRVIYRTR). Positions 15, 18, 30, 32, 40, 43, 56, and 59 each coordinate Zn(2+). Residues 84–104 (IFELFLLMSVVVAGLVGVALC) form a helical membrane-spanning segment. At 105 to 124 (TWTLLVILTAPAGTFSPGAV) the chain is on the extracellular side. A helical transmembrane segment spans residues 125–145 (LGFLCFFGFYQIFIVFAFGGI). At 146–256 (CRVSGTVRAL…VRKNHPKNNG (111 aa)) the chain is on the cytoplasmic side. The segment at 179-256 (DNIELTVLVG…VRKNHPKNNG (78 aa)) is disordered. The span at 193–203 (TDEEPTDESSE) shows a compositional bias: acidic residues. Residues 245 to 256 (KPVRKNHPKNNG) are compositionally biased toward basic residues.

Binds human MHC-I, CD86, ICAM1 and CD1D.

It is found in the host cell membrane. The protein resides in the host endoplasmic reticulum. The catalysed reaction is S-ubiquitinyl-[E2 ubiquitin-conjugating enzyme]-L-cysteine + [acceptor protein]-L-lysine = [E2 ubiquitin-conjugating enzyme]-L-cysteine + N(6)-ubiquitinyl-[acceptor protein]-L-lysine.. Its pathway is protein modification; protein ubiquitination. Functionally, membrane-bound E3 ubiquitin ligase expressed at the immediate early stage of viral reactivation to mediate polyubiquitination of various host membrane proteins related to the immune response. Promotes ubiquitination and subsequent degradation of host MHC-I, CD86, DC-SIGN and DC-SIGNR, ICAM1 and CD1D molecules, presumably to prevent lysis of infected cells by cytotoxic T-lymphocytes and NK cell. Plays a role in the down-regulation of the host stress-induced NKG2D ligands MICA, MICB and CLEC2B, which enable immune cells expressing the NKG2D receptor to recognize and annihilate infected cells prior to viral spread. Alters monocyte metabolism and proliferation by mediating rapid internalization of cellular growth factor-binding receptor tyrosine kinases from the surface leading to increased signaling. The polypeptide is E3 ubiquitin-protein ligase MIR2 (K5) (Homo sapiens (Human)).